A 186-amino-acid polypeptide reads, in one-letter code: Protein Syd (186 aa).

The protein belongs to the Syd family.

It localises to the cell inner membrane. In terms of biological role, interacts with the SecY protein in vivo. May bind preferentially to an uncomplexed state of SecY, thus functioning either as a chelating agent for excess SecY in the cell or as a regulatory factor that negatively controls the translocase function. The polypeptide is Protein Syd (Erwinia tasmaniensis (strain DSM 17950 / CFBP 7177 / CIP 109463 / NCPPB 4357 / Et1/99)).